The sequence spans 294 residues: MHNIFKGLITALITPFKDNKLDLYALERIIKHQIKHEVDAVLIAGSTGESSSLSFEEYKLLLQTSVEIVNKCIPIISGCSSNNTTYARALAAESTKIGVDGFMASPPSYVKPTQHGIYKHFEALHEVCNLPIMLYSAPTRSGVDFSDETILRLSKLPRILALKDCGVDLERPLRIRATVKKDFNILTGNDEVVLAFNAQGGVGWTSVASNIVPNICKELLEKWNKNDTKGALEIHQKLLPLYTALFVESNPIPIKYAAHYLGLCENEIRPPLTEASDSAKKQIENIITSLSIKI.

Thr-47 is a binding site for pyruvate. Tyr-135 acts as the Proton donor/acceptor in catalysis. Lys-163 serves as the catalytic Schiff-base intermediate with substrate. Residue Thr-205 participates in pyruvate binding.

Belongs to the DapA family. In terms of assembly, homotetramer; dimer of dimers.

Its subcellular location is the cytoplasm. It carries out the reaction L-aspartate 4-semialdehyde + pyruvate = (2S,4S)-4-hydroxy-2,3,4,5-tetrahydrodipicolinate + H2O + H(+). The protein operates within amino-acid biosynthesis; L-lysine biosynthesis via DAP pathway; (S)-tetrahydrodipicolinate from L-aspartate: step 3/4. In terms of biological role, catalyzes the condensation of (S)-aspartate-beta-semialdehyde [(S)-ASA] and pyruvate to 4-hydroxy-tetrahydrodipicolinate (HTPA). This is 4-hydroxy-tetrahydrodipicolinate synthase from Rickettsia montanensis.